A 155-amino-acid polypeptide reads, in one-letter code: Protein-export protein SecB (155 aa).

The protein belongs to the SecB family. In terms of assembly, homotetramer, a dimer of dimers. One homotetramer interacts with 1 SecA dimer.

The protein localises to the cytoplasm. One of the proteins required for the normal export of preproteins out of the cell cytoplasm. It is a molecular chaperone that binds to a subset of precursor proteins, maintaining them in a translocation-competent state. It also specifically binds to its receptor SecA. In Methylococcus capsulatus (strain ATCC 33009 / NCIMB 11132 / Bath), this protein is Protein-export protein SecB.